The chain runs to 650 residues: Acetyl-coenzyme A synthetase (650 aa).

Residues 191–194 (RGGR), Thr-311, and Asn-335 contribute to the CoA site. ATP contacts are provided by residues 387–389 (GEP), 411–416 (DTWWQT), Asp-500, and Arg-515. Ser-523 is a CoA binding site. Position 526 (Arg-526) interacts with ATP. Mg(2+)-binding residues include Val-537, His-539, and Val-542. Arg-584 is a binding site for CoA. Residue Lys-609 is modified to N6-acetyllysine.

The protein belongs to the ATP-dependent AMP-binding enzyme family. Mg(2+) serves as cofactor. In terms of processing, acetylated. Deacetylation by the SIR2-homolog deacetylase activates the enzyme.

It carries out the reaction acetate + ATP + CoA = acetyl-CoA + AMP + diphosphate. Its function is as follows. Catalyzes the conversion of acetate into acetyl-CoA (AcCoA), an essential intermediate at the junction of anabolic and catabolic pathways. AcsA undergoes a two-step reaction. In the first half reaction, AcsA combines acetate with ATP to form acetyl-adenylate (AcAMP) intermediate. In the second half reaction, it can then transfer the acetyl group from AcAMP to the sulfhydryl group of CoA, forming the product AcCoA. This Shewanella amazonensis (strain ATCC BAA-1098 / SB2B) protein is Acetyl-coenzyme A synthetase.